We begin with the raw amino-acid sequence, 608 residues long: Albumin (608 aa).

An N-terminal signal peptide occupies residues 1-18 (MKWVTFISLLLLFSSAYS). Residues 19–24 (RGVTRR) constitute a propeptide that is removed on maturation. 3 consecutive Albumin domains span residues 19–210 (RGVT…DALR), 211–403 (EKVL…EFKP), and 404–601 (LVEE…KLVA). His-27 serves as a coordination point for Cu cation. Ser-29 carries the phosphoserine modification. Ca(2+) contacts are provided by Glu-30 and Asp-37. Residues Cys-77 and Cys-86 are joined by a disulfide bond. 2 positions are modified to phosphoserine: Ser-82 and Ser-89. His-91 contacts Zn(2+). 6 cysteine pairs are disulfide-bonded: Cys-99–Cys-115, Cys-114–Cys-125, Cys-148–Cys-193, Cys-192–Cys-201, Cys-224–Cys-270, and Cys-269–Cys-277. At Lys-229 the chain carries N6-succinyllysine. Glu-268 serves as a coordination point for Ca(2+). Zn(2+) is bound by residues His-271 and Asp-273. 4 residues coordinate Ca(2+): Asp-273, Glu-276, Asp-279, and Asp-283. Disulfide bonds link Cys-289–Cys-303, Cys-302–Cys-313, Cys-340–Cys-385, Cys-384–Cys-393, Cys-416–Cys-462, Cys-461–Cys-472, Cys-485–Cys-501, and Cys-500–Cys-511. Phosphoserine is present on Ser-443. A phosphothreonine mark is found at Thr-444 and Thr-446. Residue Lys-460 is modified to N6-succinyllysine. Position 513 is a phosphoserine (Ser-513). 2 cysteine pairs are disulfide-bonded: Cys-538/Cys-583 and Cys-582/Cys-591. An N6-methyllysine modification is found at Lys-558. Thr-570 carries the post-translational modification Phosphothreonine. Lys-588 bears the N6-succinyllysine mark.

It belongs to the ALB/AFP/VDB family. Interacts with FCGRT; this interaction regulates ALB homeostasis. Interacts with TASOR. In plasma, occurs in a covalently-linked complex with chromophore-bound alpha-1-microglobulin; this interaction does not prevent fatty acid binding to ALB. Post-translationally, phosphorylated by FAM20C in the extracellular medium. As to expression, plasma.

It is found in the secreted. Its function is as follows. Binds water, Ca(2+), Na(+), K(+), fatty acids, hormones, bilirubin and drugs. Its main function is the regulation of the colloidal osmotic pressure of blood. Major zinc transporter in plasma, typically binds about 80% of all plasma zinc. Major calcium and magnesium transporter in plasma, binds approximately 45% of circulating calcium and magnesium in plasma. Potentially has more than two calcium-binding sites and might additionally bind calcium in a non-specific manner. The shared binding site between zinc and calcium at residue Asp-273 suggests a crosstalk between zinc and calcium transport in the blood. The rank order of affinity is zinc &gt; calcium &gt; magnesium. Binds to the bacterial siderophore enterobactin and inhibits enterobactin-mediated iron uptake of E.coli from ferric transferrin, and may thereby limit the utilization of iron and growth of enteric bacteria such as E.coli. Does not prevent iron uptake by the bacterial siderophore aerobactin. The polypeptide is Albumin (ALB) (Felis catus (Cat)).